The following is a 64-amino-acid chain: Conotoxin mr5.1a (64 aa).

Residues 1 to 19 form the signal peptide; it reads MRCVPVFVILLLLIASAPS. A propeptide spanning residues 20–48 is cleaved from the precursor; sequence VDARLKTKDDMPLPSSHANIKRTLQIHRN. Glu-60 bears the 4-carboxyglutamate mark.

This sequence belongs to the conotoxin T superfamily. In terms of processing, contains 2 disulfide bonds that can be either 'C1-C3, C2-C4' or 'C1-C4, C2-C3', since these disulfide connectivities have been observed for conotoxins with cysteine framework V (for examples, see AC P0DQQ7 and AC P81755). Expressed by the venom duct.

The protein localises to the secreted. This chain is Conotoxin mr5.1a, found in Conus marmoreus (Marble cone).